A 331-amino-acid polypeptide reads, in one-letter code: Beta-ketoacyl-[acyl-carrier-protein] synthase III (331 aa).

Catalysis depends on residues cysteine 115 and histidine 255. The ACP-binding stretch occupies residues 256-260 (QANFR). Asparagine 285 is an active-site residue.

Belongs to the thiolase-like superfamily. FabH family. As to quaternary structure, homodimer.

The protein resides in the cytoplasm. The enzyme catalyses malonyl-[ACP] + acetyl-CoA + H(+) = 3-oxobutanoyl-[ACP] + CO2 + CoA. It functions in the pathway lipid metabolism; fatty acid biosynthesis. Catalyzes the condensation reaction of fatty acid synthesis by the addition to an acyl acceptor of two carbons from malonyl-ACP. Catalyzes the first condensation reaction which initiates fatty acid synthesis and may therefore play a role in governing the total rate of fatty acid production. Possesses both acetoacetyl-ACP synthase and acetyl transacylase activities. Its substrate specificity determines the biosynthesis of branched-chain and/or straight-chain of fatty acids. The sequence is that of Beta-ketoacyl-[acyl-carrier-protein] synthase III from Helicobacter pylori (strain Shi470).